The sequence spans 394 residues: Elongation factor Tu (394 aa).

One can recognise a tr-type G domain in the interval 10-204 (KPHINIGTIG…AVDDNIPTPE (195 aa)). Positions 19-26 (GHVDHGKT) are G1. GTP is bound at residue 19-26 (GHVDHGKT). Threonine 26 contacts Mg(2+). A G2 region spans residues 60-64 (GITIN). The segment at 81-84 (DCPG) is G3. GTP-binding positions include 81–85 (DCPGH) and 136–139 (NKID). The G4 stretch occupies residues 136–139 (NKID). The G5 stretch occupies residues 174–176 (SAL).

It belongs to the TRAFAC class translation factor GTPase superfamily. Classic translation factor GTPase family. EF-Tu/EF-1A subfamily. Monomer.

The protein resides in the cytoplasm. The catalysed reaction is GTP + H2O = GDP + phosphate + H(+). In terms of biological role, GTP hydrolase that promotes the GTP-dependent binding of aminoacyl-tRNA to the A-site of ribosomes during protein biosynthesis. This Chlamydia trachomatis serovar L2 (strain ATCC VR-902B / DSM 19102 / 434/Bu) protein is Elongation factor Tu.